The following is a 199-amino-acid chain: DNA repair RAD52-like protein 2, chloroplastic (199 aa).

Residues 1–40 (MALQVQQTSAAFTISSPSTAAARIKLSPFRTVAVNRGVRC) constitute a chloroplast transit peptide. N-acetylserine is present on Ser41.

This sequence belongs to the RAD52 family. As to expression, expressed in roots and shoots. Expressed at low levels in cauline leaves, flower buds, flowers and siliques.

It localises to the plastid. Its subcellular location is the chloroplast. Involved in double-stranded DNA break repair. The protein is DNA repair RAD52-like protein 2, chloroplastic of Arabidopsis thaliana (Mouse-ear cress).